An 805-amino-acid polypeptide reads, in one-letter code: Polyribonucleotide nucleotidyltransferase (805 aa).

Residues D491 and D497 each contribute to the Mg(2+) site. The region spanning 558–617 is the KH domain; that stretch reads PRMESMIIDKNKIKNVIGTGGKNVREICEKTGVKIEISQDGTVMIYAVSRDAVEEAKNMI. The S1 motif domain maps to 627-694; sequence GKVFSGVISE…DKDHVQLSMR (68 aa). A disordered region spans residues 702–805; the sequence is DLLEHESYSS…GGGNKKPRFF (104 aa).

The protein belongs to the polyribonucleotide nucleotidyltransferase family. Requires Mg(2+) as cofactor.

Its subcellular location is the cytoplasm. The catalysed reaction is RNA(n+1) + phosphate = RNA(n) + a ribonucleoside 5'-diphosphate. In terms of biological role, involved in mRNA degradation. Catalyzes the phosphorolysis of single-stranded polyribonucleotides processively in the 3'- to 5'-direction. In Anaplasma marginale (strain Florida), this protein is Polyribonucleotide nucleotidyltransferase.